We begin with the raw amino-acid sequence, 481 residues long: uncharacterized protein (481 aa).

Helical transmembrane passes span 3–23 (YLPM…LLHG), 33–53 (FITA…YYYF), 75–95 (QAII…GMGE), 99–119 (NNMF…IVLA), 122–142 (IFNL…LVFL), 155–175 (YMIM…FLLA), 196–216 (IYGG…LPPF), 241–261 (FVLV…DYFA), 264–284 (HAVL…MALL), 303–323 (VATG…FHAI), 351–371 (GGLL…KLAI), 400–420 (IIMI…FYLI), and 443–463 (VFSL…PDIV).

Its subcellular location is the cell membrane. This is an uncharacterized protein from Methanocaldococcus jannaschii (strain ATCC 43067 / DSM 2661 / JAL-1 / JCM 10045 / NBRC 100440) (Methanococcus jannaschii).